The chain runs to 507 residues: Dolichyl pyrophosphate Man9GlcNAc2 alpha-1,3-glucosyltransferase (507 aa).

At 1-3 (MEK) the chain is on the cytoplasmic side. A helical membrane pass occupies residues 4 to 24 (WYLMTVVVLIGLTVRWTVSLN). Topologically, residues 25 to 114 (SYSGAGKPPM…SQAHKLFMRT (90 aa)) are lumenal. An N-linked (GlcNAc...) asparagine glycan is attached at N59. Residues 115 to 135 (TVLIADLLIYIPAVVLYCCCL) traverse the membrane as a helical segment. Over 136-143 (KEISTKKK) the chain is Cytoplasmic. Residues 144–164 (IANALCILLYPGLILIDYGHF) traverse the membrane as a helical segment. The Lumenal segment spans residues 165 to 172 (QYNSVSLG). The chain crosses the membrane as a helical span at residues 173 to 193 (FALWGVLGISCDCDLLGSLAF). At 194 to 226 (CLAINYKQMELYHALPFFCFLLGKCFKKGLKGK) the chain is on the cytoplasmic side. A helical membrane pass occupies residues 227–247 (GFVLLVKLACIVVASFVLCWL). The Lumenal portion of the chain corresponds to 248–297 (PFFTEREQTLQVLRRLFPVDRGLFEDKVANIWCSFNVFLKIKDILPRHIQ). Residues 298-318 (LIMSFCFTFLSLLPACIKLIL) traverse the membrane as a helical segment. The Cytoplasmic portion of the chain corresponds to 319–323 (QPSSK). Residues 324 to 344 (GFKFTLVSCALSFFLFSFQVH) traverse the membrane as a helical segment. Over 345–361 (EKSILLVSLPVCLVLSE) the chain is Lumenal. Residues 362 to 382 (IPFMSTWFLLVSTFSMLPLLL) form a helical membrane-spanning segment. Over 383–387 (KDELL) the chain is Cytoplasmic. A helical membrane pass occupies residues 388 to 408 (MPSVVTTMAFFIACVTSFSIF). The Lumenal portion of the chain corresponds to 409 to 437 (EKTSEEELQLKSFSISVRKYLPCFTFLSR). A helical transmembrane segment spans residues 438 to 458 (IIQYLFLISVITMVLLTLMTV). The Cytoplasmic portion of the chain corresponds to 459–473 (TLGPPQKLPDLFSVL). The helical transmembrane segment at 474–494 (VCFVSCLNFLFFLVYFNIIIV) threads the bilayer. At 495–507 (WDSKSGRNQKKIS) the chain is on the lumenal side.

It belongs to the ALG6/ALG8 glucosyltransferase family.

The protein localises to the endoplasmic reticulum membrane. The catalysed reaction is an alpha-D-Man-(1-&gt;2)-alpha-D-Man-(1-&gt;2)-alpha-D-Man-(1-&gt;3)-[alpha-D-Man-(1-&gt;2)-alpha-D-Man-(1-&gt;3)-[alpha-D-Man-(1-&gt;2)-alpha-D-Man-(1-&gt;6)]-alpha-D-Man-(1-&gt;6)]-beta-D-Man-(1-&gt;4)-beta-D-GlcNAc-(1-&gt;4)-alpha-D-GlcNAc-diphospho-di-trans,poly-cis-dolichol + a di-trans,poly-cis-dolichyl beta-D-glucosyl phosphate = an alpha-D-Glc-(1-&gt;3)-alpha-D-Man-(1-&gt;2)-alpha-D-Man-(1-&gt;2)-alpha-D-Man-(1-&gt;3)-[alpha-D-Man-(1-&gt;2)-alpha-D-Man-(1-&gt;3)-[alpha-D-Man-(1-&gt;2)-alpha-D-Man-(1-&gt;6)]-alpha-D-Man-(1-&gt;6)]-beta-D-Man-(1-&gt;4)-beta-D-GlcNAc-(1-&gt;4)-alpha-D-GlcNAc-diphospho-di-trans,poly-cis-dolichol + a di-trans,poly-cis-dolichyl phosphate + H(+). It functions in the pathway protein modification; protein glycosylation. Functionally, dolichyl pyrophosphate Man9GlcNAc2 alpha-1,3-glucosyltransferase that operates in the biosynthetic pathway of dolichol-linked oligosaccharides, the glycan precursors employed in protein asparagine (N)-glycosylation. The assembly of dolichol-linked oligosaccharides begins on the cytosolic side of the endoplasmic reticulum membrane and finishes in its lumen. The sequential addition of sugars to dolichol pyrophosphate produces dolichol-linked oligosaccharides containing fourteen sugars, including two GlcNAcs, nine mannoses and three glucoses. Once assembled, the oligosaccharide is transferred from the lipid to nascent proteins by oligosaccharyltransferases. In the lumen of the endoplasmic reticulum, adds the first glucose residue from dolichyl phosphate glucose (Dol-P-Glc) onto the lipid-linked oligosaccharide intermediate Man(9)GlcNAc(2)-PP-Dol to produce Glc(1)Man(9)GlcNAc(2)-PP-Dol. Glc(1)Man(9)GlcNAc(2)-PP-Dol is a substrate for ALG8, the following enzyme in the biosynthetic pathway. This chain is Dolichyl pyrophosphate Man9GlcNAc2 alpha-1,3-glucosyltransferase, found in Pongo abelii (Sumatran orangutan).